The sequence spans 900 residues: Probable beta-mannosidase (900 aa).

The signal sequence occupies residues 1–21; it reads MRTSLVVCLFWLLFQLHTTHG. Residues Asn38, Asn42, and Asn131 are each glycosylated (N-linked (GlcNAc...) asparagine). Residue Glu463 is the Proton donor of the active site. N-linked (GlcNAc...) asparagine glycans are attached at residues Asn477, Asn576, Asn661, and Asn738.

Belongs to the glycosyl hydrolase 2 family.

The protein resides in the lysosome. It catalyses the reaction Hydrolysis of terminal, non-reducing beta-D-mannose residues in beta-D-mannosides.. In Caenorhabditis elegans, this protein is Probable beta-mannosidase.